The primary structure comprises 447 residues: Elongation factor 1-alpha (447 aa).

The 226-residue stretch at 5–230 (KTHINIVVIG…DQINEPKRPS (226 aa)) folds into the tr-type G domain. The tract at residues 14 to 21 (GHVDSGKS) is G1. Position 14–21 (14–21 (GHVDSGKS)) interacts with GTP. An N6,N6-dimethyllysine modification is found at K55. The tract at residues 70–74 (GITID) is G2. Position 79 is an N6,N6,N6-trimethyllysine (K79). The G3 stretch occupies residues 91–94 (DAPG). Residues 91-95 (DAPGH) and 153-156 (NKMD) each bind GTP. The G4 stretch occupies residues 153-156 (NKMD). The residue at position 187 (K187) is an N6,N6,N6-trimethyllysine. The interval 194–196 (SGF) is G5. K261 is subject to N6-methyllysine. 5-glutamyl glycerylphosphorylethanolamine is present on E289. N6,N6,N6-trimethyllysine is present on K306. E362 is subject to 5-glutamyl glycerylphosphorylethanolamine. N6,N6,N6-trimethyllysine is present on K396.

It belongs to the TRAFAC class translation factor GTPase superfamily. Classic translation factor GTPase family. EF-Tu/EF-1A subfamily.

It localises to the cytoplasm. This protein promotes the GTP-dependent binding of aminoacyl-tRNA to the A-site of ribosomes during protein biosynthesis. This chain is Elongation factor 1-alpha (REFA1), found in Oryza sativa subsp. japonica (Rice).